The chain runs to 261 residues: HLA class II histocompatibility antigen, DQ beta 1 chain (261 aa).

The signal sequence occupies residues 1-32; sequence MSWKKALRIPGGLRAATVTLMLAMLSTPVAEG. Residues 33-126 form a beta-1 region; the sequence is RDSPEDFVYQ…LELRTTLQRR (94 aa). At 33 to 230 the chain is on the extracellular side; that stretch reads RDSPEDFVYQ…RAQSESAQSK (198 aa). 2 cysteine pairs are disulfide-bonded: cysteine 47–cysteine 111 and cysteine 149–cysteine 205. Asparagine 51 carries N-linked (GlcNAc...) asparagine glycosylation. The beta-2 stretch occupies residues 127-220; sequence VEPTVTISPS…SLQNPITVEW (94 aa). The region spanning 129–217 is the Ig-like C1-type domain; that stretch reads PTVTISPSRT…EHPSLQNPIT (89 aa). Positions 221 to 230 are connecting peptide; it reads RAQSESAQSK. The helical transmembrane segment at 231-251 threads the bilayer; sequence MLSGIGGFVLGLIFLGLGLII. The Cytoplasmic portion of the chain corresponds to 252 to 261; the sequence is HHRSQKGLLH.

The protein belongs to the MHC class II family. In terms of assembly, heterodimer of an alpha and a beta subunit; also referred as MHC class II molecule. In the endoplasmic reticulum (ER) it forms a heterononamer; 3 MHC class II molecules bind to a CD74 homotrimer (also known as invariant chain or HLA class II histocompatibility antigen gamma chain). In the endosomal/lysosomal system; CD74 undergoes sequential degradation by various proteases; leaving a small fragment termed CLIP on each MHC class II molecule. MHC class II molecule interacts with HLA_DM, and HLA_DO in B-cells, in order to release CLIP and facilitate the binding of antigenic peptides.

Its subcellular location is the cell membrane. It localises to the endoplasmic reticulum membrane. The protein resides in the golgi apparatus. The protein localises to the trans-Golgi network membrane. It is found in the endosome membrane. Its subcellular location is the lysosome membrane. Binds peptides derived from antigens that access the endocytic route of antigen presenting cells (APC) and presents them on the cell surface for recognition by the CD4 T-cells. The peptide binding cleft accommodates peptides of 10-30 residues. The peptides presented by MHC class II molecules are generated mostly by degradation of proteins that access the endocytic route, where they are processed by lysosomal proteases and other hydrolases. Exogenous antigens that have been endocytosed by the APC are thus readily available for presentation via MHC II molecules, and for this reason this antigen presentation pathway is usually referred to as exogenous. As membrane proteins on their way to degradation in lysosomes as part of their normal turn-over are also contained in the endosomal/lysosomal compartments, exogenous antigens must compete with those derived from endogenous components. Autophagy is also a source of endogenous peptides, autophagosomes constitutively fuse with MHC class II loading compartments. In addition to APCs, other cells of the gastrointestinal tract, such as epithelial cells, express MHC class II molecules and CD74 and act as APCs, which is an unusual trait of the GI tract. To produce a MHC class II molecule that presents an antigen, three MHC class II molecules (heterodimers of an alpha and a beta chain) associate with a CD74 trimer in the ER to form a heterononamer. Soon after the entry of this complex into the endosomal/lysosomal system where antigen processing occurs, CD74 undergoes a sequential degradation by various proteases, including CTSS and CTSL, leaving a small fragment termed CLIP (class-II-associated invariant chain peptide). The removal of CLIP is facilitated by HLA-DM via direct binding to the alpha-beta-CLIP complex so that CLIP is released. HLA-DM stabilizes MHC class II molecules until primary high affinity antigenic peptides are bound. The MHC II molecule bound to a peptide is then transported to the cell membrane surface. In B-cells, the interaction between HLA-DM and MHC class II molecules is regulated by HLA-DO. Primary dendritic cells (DCs) also to express HLA-DO. Lysosomal microenvironment has been implicated in the regulation of antigen loading into MHC II molecules, increased acidification produces increased proteolysis and efficient peptide loading. The polypeptide is HLA class II histocompatibility antigen, DQ beta 1 chain (HLA-DQB1) (Homo sapiens (Human)).